A 259-amino-acid polypeptide reads, in one-letter code: Deoxyribose-phosphate aldolase (259 aa).

D102 serves as the catalytic Proton donor/acceptor. K167 functions as the Schiff-base intermediate with acetaldehyde in the catalytic mechanism. The active-site Proton donor/acceptor is K201.

Belongs to the DeoC/FbaB aldolase family. DeoC type 2 subfamily.

It is found in the cytoplasm. It carries out the reaction 2-deoxy-D-ribose 5-phosphate = D-glyceraldehyde 3-phosphate + acetaldehyde. Its pathway is carbohydrate degradation; 2-deoxy-D-ribose 1-phosphate degradation; D-glyceraldehyde 3-phosphate and acetaldehyde from 2-deoxy-alpha-D-ribose 1-phosphate: step 2/2. Functionally, catalyzes a reversible aldol reaction between acetaldehyde and D-glyceraldehyde 3-phosphate to generate 2-deoxy-D-ribose 5-phosphate. The sequence is that of Deoxyribose-phosphate aldolase from Erwinia tasmaniensis (strain DSM 17950 / CFBP 7177 / CIP 109463 / NCPPB 4357 / Et1/99).